We begin with the raw amino-acid sequence, 181 residues long: HGPRTase-like protein 1 (181 aa).

The protein belongs to the purine/pyrimidine phosphoribosyltransferase family. Archaeal HPRT subfamily.

Its function is as follows. May catalyze a purine salvage reaction, the substrate is unknown. This chain is HGPRTase-like protein 1, found in Halalkalicoccus jeotgali (strain DSM 18796 / CECT 7217 / JCM 14584 / KCTC 4019 / B3).